A 113-amino-acid polypeptide reads, in one-letter code: Beta-defensin 112 (113 aa).

Disulfide bonds link C54–C82, C61–C75, and C65–C83.

This sequence belongs to the beta-defensin family.

Its subcellular location is the secreted. In terms of biological role, has antibacterial activity. The polypeptide is Beta-defensin 112 (DEFB112) (Homo sapiens (Human)).